The sequence spans 604 residues: MAVARTVFGLGTLSYLHQAPLFLKTSQSLFPRPSLSLKPMKHDFVCVKATTKSSTSDDLESGRPSILFSPSIWGDYFLSVSVDDSEFDDIAREIESVMKPYVRDRLISSHNSNKDKIRLIHLLISLGISYYFESEIEMILNKAFEELDMIIAEEDDLETISIMFEVFRLYQHKMSCDSFVRFKGEDGRLKESLVGDVRGMLQLYQAAHLGTPSDQYIMEEAKSFTRNHLESLVESTTIPPHFSSHIRDALYIDRYHNMEILVARKYISFYEQEEGHDLTLLKFGKLSFNYCRLHYIQELKTLTKWWKDQDIPSNLPCVRDRIVETYFPTLGLYFEPRFSLGRIIIAKMTIIVVALNDVCDSYATYPEAKSLIDSLQRWDIEAIDELPNYSRIVLRLILETIGEIEREMKPRGRSASVQHTIDETKSLGRAYLALSKWASEGYMPTFDEYMEVGEVTGGMDDFALYSFIAMEDCDEKPLYEWFDSKPKILQALSVLYRINNDIVTYEREMSKGEVVNGVNSYMNQHGVTKEEAVEELRKMARDNYKIVMEELLTITDVPRPVLVRCLNLARLFDVFCKHGNDEFTYPHGNLKDLITSIFIHPIPV.

5 residues coordinate Mg(2+): Asn356, Asp360, Asn500, Thr504, and Glu508. Positions 356–360 match the DDXXD motif; degenerate motif; the sequence is NDVCD.

This sequence belongs to the terpene synthase family. Tpsa subfamily. Mg(2+) is required as a cofactor. Mn(2+) serves as cofactor.

It is found in the cytoplasm. It functions in the pathway secondary metabolite biosynthesis; terpenoid biosynthesis. Involved in terpene biosynthesis in roots. Possesses sesquiterpene (C15) synthase activity and diterpene (C20) synthase activity in vitro. This is Terpenoid synthase 30 from Arabidopsis thaliana (Mouse-ear cress).